The chain runs to 222 residues: UPF0758 protein Lcho_0695 (222 aa).

One can recognise an MPN domain in the interval 100 to 222 (VFDSPQAVRD…VVSFAERGLL (123 aa)). Residues His-171, His-173, and Asp-184 each coordinate Zn(2+). The JAMM motif motif lies at 171-184 (HNHPSGVAEPSRAD).

The protein belongs to the UPF0758 family.

In Leptothrix cholodnii (strain ATCC 51168 / LMG 8142 / SP-6) (Leptothrix discophora (strain SP-6)), this protein is UPF0758 protein Lcho_0695.